A 421-amino-acid chain; its full sequence is WD repeat and SOCS box-containing protein 1 (421 aa).

WD repeat units follow at residues 124 to 165 (SRCV…LLLN), 168 to 208 (DHIE…NMVK), 212 to 251 (AHQN…MIRK), 254 to 293 (GHHH…LLME), and 309 to 346 (ANDR…DCPV). Residues 372–421 (DGSVYFWATPRQVPSLQHICRMSIRRVMSTQEVQKLPVPSKILAFLSYRG) enclose the SOCS box domain.

In terms of assembly, interacts with DIO2. Component of the probable ECS(WSB1) E3 ubiquitin-protein ligase complex which contains CUL5, RNF7/RBX2, Elongin BC complex and WSB1. Component of a probable ECS-like E3 ubiquitin-protein ligase complex which contains CUL5, RBX1, Elongin BC complex and WSB1. Interacts with CUL5, RNF7, ELOB and ELOC. Binds to HIPK2 through WD40 repeats.

It functions in the pathway protein modification; protein ubiquitination. Its function is as follows. Probable substrate-recognition component of a SCF-like ECS (Elongin-Cullin-SOCS-box protein) E3 ubiquitin ligase complex which mediates the ubiquitination and subsequent proteasomal degradation of target proteins. Recognizes type II iodothyronine deiodinase/DIO2. Confers constitutive instability to HIPK2 through proteasomal degradation. In Mus musculus (Mouse), this protein is WD repeat and SOCS box-containing protein 1 (Wsb1).